Reading from the N-terminus, the 438-residue chain is Probable tRNA pseudouridine synthase D (438 aa).

D86 serves as the catalytic Nucleophile. Residues G165–L390 enclose the TRUD domain.

This sequence belongs to the pseudouridine synthase TruD family.

The catalysed reaction is uridine(13) in tRNA = pseudouridine(13) in tRNA. In terms of biological role, could be responsible for synthesis of pseudouridine from uracil-13 in transfer RNAs. The chain is Probable tRNA pseudouridine synthase D from Methanosarcina barkeri (strain Fusaro / DSM 804).